A 458-amino-acid chain; its full sequence is Argininosuccinate lyase (458 aa).

The protein belongs to the lyase 1 family. Argininosuccinate lyase subfamily.

Its subcellular location is the cytoplasm. The enzyme catalyses 2-(N(omega)-L-arginino)succinate = fumarate + L-arginine. Its pathway is amino-acid biosynthesis; L-arginine biosynthesis; L-arginine from L-ornithine and carbamoyl phosphate: step 3/3. The chain is Argininosuccinate lyase from Actinobacillus pleuropneumoniae serotype 5b (strain L20).